Consider the following 401-residue polypeptide: Adaptive-response sensory kinase SasA (401 aa).

The region spanning 175–400 (MLVHDLRNPL…WFHFTLPVYP (226 aa)) is the Histidine kinase domain. Histidine 178 bears the Phosphohistidine; by autocatalysis mark.

In terms of assembly, homooligomerizes. Interacts with KaiC. Participates in the KaiABC clock complex, whose core is composed of a KaiC homohexamer, 6 KaiB and up to 6 KaiA dimers. SasA and KaiB(fs) compete to bind to KaiC.

It carries out the reaction ATP + protein L-histidine = ADP + protein N-phospho-L-histidine.. Its function is as follows. Member of the two-component regulatory system SasA/RpaA involved in genome-wide circadian gene expression. One of several clock output pathways. Participates in the Kai clock protein complex, the main circadian regulator in cyanobacteria, via its interaction with KaiC. KaiC enhances the autophosphorylation activity of SasA, which then transfers its phosphate group to RpaA to activate it. In addition to its output function, recruits fold-shifted KaiB (KaiB(fs)) to KaiC to cooperatively form the KaiB(6):KaiC(6) complex (independent of SasA kinase activity). Required for robustness of the circadian rhythm of gene expression and is involved in clock output, also required for adaptation to light/dark cycles. This chain is Adaptive-response sensory kinase SasA, found in Nostoc sp. (strain PCC 7120 / SAG 25.82 / UTEX 2576).